The chain runs to 273 residues: Urease accessory protein UreD (273 aa).

Belongs to the UreD family. In terms of assembly, ureD, UreF and UreG form a complex that acts as a GTP-hydrolysis-dependent molecular chaperone, activating the urease apoprotein by helping to assemble the nickel containing metallocenter of UreC. The UreE protein probably delivers the nickel.

Its subcellular location is the cytoplasm. Required for maturation of urease via the functional incorporation of the urease nickel metallocenter. In Rhizobium rhizogenes (strain K84 / ATCC BAA-868) (Agrobacterium radiobacter), this protein is Urease accessory protein UreD.